A 354-amino-acid chain; its full sequence is Dual-specificity RNA methyltransferase RlmN (354 aa).

Residue Glu86 is the Proton acceptor of the active site. A Radical SAM core domain is found at 105 to 338 (RHARYTICVS…CTIRQSKGLD (234 aa)). Cys112 and Cys343 are disulfide-bonded. Residues Cys119, Cys123, and Cys126 each contribute to the [4Fe-4S] cluster site. S-adenosyl-L-methionine contacts are provided by residues 169 to 170 (GE), Ser201, 224 to 226 (SLH), and Asn300. Catalysis depends on Cys343, which acts as the S-methylcysteine intermediate.

It belongs to the radical SAM superfamily. RlmN family. [4Fe-4S] cluster is required as a cofactor.

It is found in the cytoplasm. It catalyses the reaction adenosine(2503) in 23S rRNA + 2 reduced [2Fe-2S]-[ferredoxin] + 2 S-adenosyl-L-methionine = 2-methyladenosine(2503) in 23S rRNA + 5'-deoxyadenosine + L-methionine + 2 oxidized [2Fe-2S]-[ferredoxin] + S-adenosyl-L-homocysteine. The enzyme catalyses adenosine(37) in tRNA + 2 reduced [2Fe-2S]-[ferredoxin] + 2 S-adenosyl-L-methionine = 2-methyladenosine(37) in tRNA + 5'-deoxyadenosine + L-methionine + 2 oxidized [2Fe-2S]-[ferredoxin] + S-adenosyl-L-homocysteine. In terms of biological role, specifically methylates position 2 of adenine 2503 in 23S rRNA and position 2 of adenine 37 in tRNAs. m2A2503 modification seems to play a crucial role in the proofreading step occurring at the peptidyl transferase center and thus would serve to optimize ribosomal fidelity. This Campylobacter fetus subsp. fetus (strain 82-40) protein is Dual-specificity RNA methyltransferase RlmN.